The following is a 556-amino-acid chain: CDP-diacylglycerol--glycerol-3-phosphate 3-phosphatidyltransferase, mitochondrial (556 aa).

The transit peptide at 1–28 directs the protein to the mitochondrion; sequence MAAAAAAAAGPVFWRRLLGLLPGRPGLA. Residue serine 49 is modified to Phosphoserine. 124-131 is a binding site for ATP; it reads ASLYLGIG. 2 consecutive PLD phosphodiesterase domains span residues 215 to 241 and 419 to 457; these read TIGLQHIKVYLFDNNVILSGANLSDSY and FGAKGVAGAIPAAYVHIERQFYSEVCSLGQQERVQLQEY. Active-site residues include histidine 220, lysine 222, and aspartate 227.

This sequence belongs to the CDP-alcohol phosphatidyltransferase class-II family.

Its subcellular location is the mitochondrion. It carries out the reaction a CDP-1,2-diacyl-sn-glycerol + sn-glycerol 3-phosphate = a 1,2-diacyl-sn-glycero-3-phospho-(1'-sn-glycero-3'-phosphate) + CMP + H(+). The protein operates within phospholipid metabolism; phosphatidylglycerol biosynthesis; phosphatidylglycerol from CDP-diacylglycerol: step 1/2. Its activity is regulated as follows. Activated by calcium and magnesium and inhibited by other bivalent cations. In terms of biological role, functions in the biosynthesis of the anionic phospholipids phosphatidylglycerol and cardiolipin. This Bos taurus (Bovine) protein is CDP-diacylglycerol--glycerol-3-phosphate 3-phosphatidyltransferase, mitochondrial (PGS1).